A 188-amino-acid chain; its full sequence is ATP synthase subunit b 1 (188 aa).

Residues 35–55 form a helical membrane-spanning segment; sequence VHFGSHLFWLAISFGLFYLFI.

Belongs to the ATPase B chain family. As to quaternary structure, F-type ATPases have 2 components, F(1) - the catalytic core - and F(0) - the membrane proton channel. F(1) has five subunits: alpha(3), beta(3), gamma(1), delta(1), epsilon(1). F(0) has three main subunits: a(1), b(2) and c(10-14). The alpha and beta chains form an alternating ring which encloses part of the gamma chain. F(1) is attached to F(0) by a central stalk formed by the gamma and epsilon chains, while a peripheral stalk is formed by the delta and b chains.

It localises to the cell inner membrane. Functionally, f(1)F(0) ATP synthase produces ATP from ADP in the presence of a proton or sodium gradient. F-type ATPases consist of two structural domains, F(1) containing the extramembraneous catalytic core and F(0) containing the membrane proton channel, linked together by a central stalk and a peripheral stalk. During catalysis, ATP synthesis in the catalytic domain of F(1) is coupled via a rotary mechanism of the central stalk subunits to proton translocation. Component of the F(0) channel, it forms part of the peripheral stalk, linking F(1) to F(0). The protein is ATP synthase subunit b 1 of Bartonella henselae (strain ATCC 49882 / DSM 28221 / CCUG 30454 / Houston 1) (Rochalimaea henselae).